We begin with the raw amino-acid sequence, 202 residues long: MRLWLVRHGETEANVAGLYSGHAPTPLTEKGIGQAKTLHTLLRHAPFDRVLCSELERARHTARLVLEGRDTPQHILPELNEMYFVDWEMRHHRDLTHEDAESYAAWCTDWQNAVPTNGEGFQAFTRRVERFISRLGAFSDCQNLLIVSHQGVLSLLIARLLAMPAASLWHFRVEQGCWSTIDICEGFATLKVLNSRAVWRPE.

H8 functions as the Tele-phosphohistidine intermediate in the catalytic mechanism. E81 acts as the Proton donor/acceptor in catalysis.

Belongs to the phosphoglycerate mutase family.

The enzyme catalyses adenosylcob(III)alamin 5'-phosphate + H2O = adenosylcob(III)alamin + phosphate. It catalyses the reaction alpha-ribazole 5'-phosphate + H2O = alpha-ribazole + phosphate. Its pathway is nucleoside biosynthesis; alpha-ribazole biosynthesis; alpha-ribazole from 5,6-dimethylbenzimidazole: step 2/2. Its function is as follows. Catalyzes the conversion of adenosylcobalamin 5'-phosphate to adenosylcobalamin (vitamin B12); involved in the assembly of the nucleotide loop of cobalamin. Also catalyzes the hydrolysis of the phospho group from alpha-ribazole 5'-phosphate to form alpha-ribazole. The chain is Adenosylcobalamin/alpha-ribazole phosphatase (cobC) from Salmonella typhi.